The sequence spans 475 residues: Ribulose bisphosphate carboxylase large chain (475 aa).

Residues 1–2 constitute a propeptide that is removed on maturation; the sequence is MS. N-acetylproline is present on Pro-3. Lys-14 is modified (N6,N6,N6-trimethyllysine). 2 residues coordinate substrate: Asn-123 and Thr-173. Residue Lys-175 is the Proton acceptor of the active site. Lys-177 is a substrate binding site. Residues Lys-201, Asp-203, and Glu-204 each contribute to the Mg(2+) site. Position 201 is an N6-carboxylysine (Lys-201). The active-site Proton acceptor is the His-294. The substrate site is built by Arg-295, His-327, and Ser-379.

It belongs to the RuBisCO large chain family. Type I subfamily. Heterohexadecamer of 8 large chains and 8 small chains; disulfide-linked. The disulfide link is formed within the large subunit homodimers. Requires Mg(2+) as cofactor. The disulfide bond which can form in the large chain dimeric partners within the hexadecamer appears to be associated with oxidative stress and protein turnover.

Its subcellular location is the plastid. The protein localises to the chloroplast. The enzyme catalyses 2 (2R)-3-phosphoglycerate + 2 H(+) = D-ribulose 1,5-bisphosphate + CO2 + H2O. It catalyses the reaction D-ribulose 1,5-bisphosphate + O2 = 2-phosphoglycolate + (2R)-3-phosphoglycerate + 2 H(+). Functionally, ruBisCO catalyzes two reactions: the carboxylation of D-ribulose 1,5-bisphosphate, the primary event in carbon dioxide fixation, as well as the oxidative fragmentation of the pentose substrate in the photorespiration process. Both reactions occur simultaneously and in competition at the same active site. The sequence is that of Ribulose bisphosphate carboxylase large chain from Clarkia xantiana (Gunsight clarkia).